The primary structure comprises 57 residues: uncharacterized protein (57 aa).

The tract at residues Gln-34–Phe-57 is disordered.

This is an uncharacterized protein from Saccharomyces cerevisiae (strain ATCC 204508 / S288c) (Baker's yeast).